The sequence spans 285 residues: Mitochondrial substrate carrier family protein S (285 aa).

The Mitochondrial intermembrane portion of the chain corresponds to 1–9 (MSTERGLKD). 3 Solcar repeats span residues 4–87 (ERGL…MKVL), 96–183 (LTVG…CKRY), and 197–283 (LNLP…VIKL). A helical membrane pass occupies residues 10–30 (SIAGTVAGAACLFTGHPFDTI). Residues 31–61 (RVRLQTSNTPIGIMECFRNTIKYEGFSGLYK) lie on the Mitochondrial matrix side of the membrane. The chain crosses the membrane as a helical span at residues 62–82 (GVTSPLFGMMFETAVLFAGYG). Residues 83–101 (QMKVLLQKDENTPLTVGQC) lie on the Mitochondrial intermembrane side of the membrane. The chain crosses the membrane as a helical span at residues 102 to 122 (AIAGGFAGVGASVVLTPVELV). Residues 123-150 (KCRLQVQTTGPQKYKGSLDCLVQILKEG) lie on the Mitochondrial matrix side of the membrane. Residues 151–172 (GIRGAYRGFTPTIAREFVGNMA) traverse the membrane as a helical segment. At 173–199 (FFSTYETCKRYFKNKENKPNDDDELNL) the chain is on the mitochondrial intermembrane side. The helical transmembrane segment at 200 to 220 (PALIISGGLGGMAYWTVLYPV) threads the bilayer. The Mitochondrial matrix segment spans residues 221 to 258 (DVAKSKIQISEGAGPSPSIVKVLKEIYSKEGVKGLFRG). Residues 259–277 (YTPTIIRSFPANAAMFSVY) traverse the membrane as a helical segment. Residues 278–285 (ELVIKLLG) lie on the Mitochondrial intermembrane side of the membrane.

This sequence belongs to the mitochondrial carrier (TC 2.A.29) family.

It localises to the mitochondrion inner membrane. In terms of biological role, mitochondrial solute carriers shuttle metabolites, nucleotides, and cofactors through the mitochondrial inner membrane. Mediates the transport of acylcarnitines of different length across the mitochondrial inner membrane from the cytosol to the mitochondrial matrix for their oxidation by the mitochondrial fatty acid-oxidation pathway. The polypeptide is Mitochondrial substrate carrier family protein S (mcfS) (Dictyostelium discoideum (Social amoeba)).